The sequence spans 213 residues: 3-demethoxyubiquinol 3-hydroxylase (213 aa).

Fe cation contacts are provided by glutamate 62, glutamate 92, histidine 95, glutamate 144, glutamate 176, and histidine 179.

Belongs to the COQ7 family. The cofactor is Fe cation.

It is found in the cell membrane. It carries out the reaction a 5-methoxy-2-methyl-3-(all-trans-polyprenyl)benzene-1,4-diol + AH2 + O2 = a 3-demethylubiquinol + A + H2O. Its pathway is cofactor biosynthesis; ubiquinone biosynthesis. Catalyzes the hydroxylation of 2-nonaprenyl-3-methyl-6-methoxy-1,4-benzoquinol during ubiquinone biosynthesis. In Legionella pneumophila subsp. pneumophila (strain Philadelphia 1 / ATCC 33152 / DSM 7513), this protein is 3-demethoxyubiquinol 3-hydroxylase.